Reading from the N-terminus, the 640-residue chain is Phosphomethylpyrimidine synthase (640 aa).

Substrate is bound by residues N235, M264, Y293, H329, 349–351 (SRG), 390–393 (DGLR), and E429. H433 provides a ligand contact to Zn(2+). Position 456 (Y456) interacts with substrate. H497 contributes to the Zn(2+) binding site. [4Fe-4S] cluster-binding residues include C577, C580, and C585.

This sequence belongs to the ThiC family. As to quaternary structure, homodimer. [4Fe-4S] cluster serves as cofactor.

The catalysed reaction is 5-amino-1-(5-phospho-beta-D-ribosyl)imidazole + S-adenosyl-L-methionine = 4-amino-2-methyl-5-(phosphooxymethyl)pyrimidine + CO + 5'-deoxyadenosine + formate + L-methionine + 3 H(+). The protein operates within cofactor biosynthesis; thiamine diphosphate biosynthesis. Its function is as follows. Catalyzes the synthesis of the hydroxymethylpyrimidine phosphate (HMP-P) moiety of thiamine from aminoimidazole ribotide (AIR) in a radical S-adenosyl-L-methionine (SAM)-dependent reaction. The chain is Phosphomethylpyrimidine synthase from Photobacterium profundum (strain SS9).